The primary structure comprises 475 residues: ATP synthase subunit beta (475 aa).

Residue 148–155 (GGAGVGKT) coordinates ATP.

This sequence belongs to the ATPase alpha/beta chains family. As to quaternary structure, F-type ATPases have 2 components, CF(1) - the catalytic core - and CF(0) - the membrane proton channel. CF(1) has five subunits: alpha(3), beta(3), gamma(1), delta(1), epsilon(1). CF(0) has three main subunits: a(1), b(2) and c(9-12). The alpha and beta chains form an alternating ring which encloses part of the gamma chain. CF(1) is attached to CF(0) by a central stalk formed by the gamma and epsilon chains, while a peripheral stalk is formed by the delta and b chains.

It is found in the cell inner membrane. The catalysed reaction is ATP + H2O + 4 H(+)(in) = ADP + phosphate + 5 H(+)(out). In terms of biological role, produces ATP from ADP in the presence of a proton gradient across the membrane. The catalytic sites are hosted primarily by the beta subunits. This chain is ATP synthase subunit beta, found in Psychrobacter sp. (strain PRwf-1).